A 290-amino-acid polypeptide reads, in one-letter code: Ribosomal RNA small subunit methyltransferase A (290 aa).

Residues Asn27, Leu29, Gly54, Glu75, Asp100, and Asn125 each coordinate S-adenosyl-L-methionine.

This sequence belongs to the class I-like SAM-binding methyltransferase superfamily. rRNA adenine N(6)-methyltransferase family. RsmA subfamily.

Its subcellular location is the cytoplasm. It carries out the reaction adenosine(1518)/adenosine(1519) in 16S rRNA + 4 S-adenosyl-L-methionine = N(6)-dimethyladenosine(1518)/N(6)-dimethyladenosine(1519) in 16S rRNA + 4 S-adenosyl-L-homocysteine + 4 H(+). In terms of biological role, specifically dimethylates two adjacent adenosines (A1518 and A1519) in the loop of a conserved hairpin near the 3'-end of 16S rRNA in the 30S particle. May play a critical role in biogenesis of 30S subunits. This Streptococcus pneumoniae (strain 70585) protein is Ribosomal RNA small subunit methyltransferase A.